The following is a 253-amino-acid chain: Ribosomal RNA small subunit methyltransferase I (253 aa).

Positions arginine 230–proline 246 are enriched in basic and acidic residues. Residues arginine 230–lysine 253 are disordered.

It belongs to the methyltransferase superfamily. RsmI family.

It is found in the cytoplasm. It carries out the reaction cytidine(1402) in 16S rRNA + S-adenosyl-L-methionine = 2'-O-methylcytidine(1402) in 16S rRNA + S-adenosyl-L-homocysteine + H(+). In terms of biological role, catalyzes the 2'-O-methylation of the ribose of cytidine 1402 (C1402) in 16S rRNA. This is Ribosomal RNA small subunit methyltransferase I from Leptospira borgpetersenii serovar Hardjo-bovis (strain L550).